A 371-amino-acid polypeptide reads, in one-letter code: 2-aminoethylphosphonate--pyruvate transaminase (371 aa).

Residue Lys195 is modified to N6-(pyridoxal phosphate)lysine.

It belongs to the class-V pyridoxal-phosphate-dependent aminotransferase family. PhnW subfamily. In terms of assembly, homodimer. Pyridoxal 5'-phosphate serves as cofactor.

The catalysed reaction is (2-aminoethyl)phosphonate + pyruvate = phosphonoacetaldehyde + L-alanine. Its function is as follows. Involved in phosphonate degradation. This is 2-aminoethylphosphonate--pyruvate transaminase from Pseudomonas aeruginosa (strain UCBPP-PA14).